The chain runs to 491 residues: Aspartyl/glutamyl-tRNA(Asn/Gln) amidotransferase subunit B (491 aa).

It belongs to the GatB/GatE family. GatB subfamily. Heterotrimer of A, B and C subunits.

It catalyses the reaction L-glutamyl-tRNA(Gln) + L-glutamine + ATP + H2O = L-glutaminyl-tRNA(Gln) + L-glutamate + ADP + phosphate + H(+). The catalysed reaction is L-aspartyl-tRNA(Asn) + L-glutamine + ATP + H2O = L-asparaginyl-tRNA(Asn) + L-glutamate + ADP + phosphate + 2 H(+). Allows the formation of correctly charged Asn-tRNA(Asn) or Gln-tRNA(Gln) through the transamidation of misacylated Asp-tRNA(Asn) or Glu-tRNA(Gln) in organisms which lack either or both of asparaginyl-tRNA or glutaminyl-tRNA synthetases. The reaction takes place in the presence of glutamine and ATP through an activated phospho-Asp-tRNA(Asn) or phospho-Glu-tRNA(Gln). This is Aspartyl/glutamyl-tRNA(Asn/Gln) amidotransferase subunit B from Burkholderia multivorans (strain ATCC 17616 / 249).